A 273-amino-acid chain; its full sequence is Small ribosomal subunit protein uS2 (273 aa).

This sequence belongs to the universal ribosomal protein uS2 family.

The protein is Small ribosomal subunit protein uS2 of Mycolicibacterium vanbaalenii (strain DSM 7251 / JCM 13017 / BCRC 16820 / KCTC 9966 / NRRL B-24157 / PYR-1) (Mycobacterium vanbaalenii).